Consider the following 272-residue polypeptide: Alkaline ceramidase (272 aa).

2 helical membrane-spanning segments follow: residues 34–54 and 61–81; these read FANT…IMLL and VNGG…ASTY. Residue H83 coordinates Zn(2+). Transmembrane regions (helical) follow at residues 96-116, 124-144, 148-168, and 183-203; these read LSLV…MKWF, LTLV…LCFL, LNAI…NYEG, and ILAL…LCDF. Zn(2+) is bound by residues H213 and H217. Residues 214–234 traverse the membrane as a helical segment; sequence ALFHLLAGLAGYTIFIMFSMI. N256 is a glycosylation site (N-linked (GlcNAc...) asparagine).

It belongs to the alkaline ceramidase family. It depends on Zn(2+) as a cofactor.

The protein localises to the membrane. The catalysed reaction is an N-acyl-sphingoid base + H2O = a sphingoid base + a fatty acid. It catalyses the reaction an N-acylsphing-4-enine + H2O = sphing-4-enine + a fatty acid. The enzyme catalyses an N-acyl-15-methylhexadecasphing-4-enine + H2O = 15-methylhexadecasphing-4-enine + a fatty acid. Its pathway is lipid metabolism; sphingolipid metabolism. Functionally, hydrolyzes the sphingolipid ceramide into sphingoid base and free fatty acid. C.elegans contain specific sphingoid bases, which are unique or different in structure compared to the sphingoid bases found in other animals. Two examples of these distinctive compounds are: 15-methylhexadecasphinganine and 15-methylhexadecasphing-4-enine. This chain is Alkaline ceramidase, found in Caenorhabditis elegans.